Here is a 337-residue protein sequence, read N- to C-terminus: Transaldolase (337 aa).

Positions 1–10 (MSGSPVKRQR) match the Nuclear localization signal motif. The residue at position 115 (Lys115) is an N6-acetyllysine. Lys142 functions as the Schiff-base intermediate with substrate in the catalytic mechanism. At Lys219 the chain carries N6-acetyllysine. Phosphoserine occurs at positions 237 and 256. Residues Lys269, Lys286, and Lys321 each carry the N6-acetyllysine modification.

It belongs to the transaldolase family. Type 1 subfamily. In terms of assembly, homodimer. Interacts with KPNA1 and KPNA4.

It is found in the nucleus. It localises to the cytoplasm. It catalyses the reaction D-sedoheptulose 7-phosphate + D-glyceraldehyde 3-phosphate = D-erythrose 4-phosphate + beta-D-fructose 6-phosphate. It functions in the pathway carbohydrate degradation; pentose phosphate pathway; D-glyceraldehyde 3-phosphate and beta-D-fructose 6-phosphate from D-ribose 5-phosphate and D-xylulose 5-phosphate (non-oxidative stage): step 2/3. Its function is as follows. Catalyzes the rate-limiting step of the non-oxidative phase in the pentose phosphate pathway. Catalyzes the reversible conversion of sedheptulose-7-phosphate and D-glyceraldehyde 3-phosphate into erythrose-4-phosphate and beta-D-fructose 6-phosphate. In Rattus norvegicus (Rat), this protein is Transaldolase (Taldo1).